The sequence spans 448 residues: UDP-N-acetylmuramoylalanine--D-glutamate ligase (448 aa).

Position 116 to 122 (116 to 122 (GSNAKST)) interacts with ATP.

Belongs to the MurCDEF family.

The protein resides in the cytoplasm. It catalyses the reaction UDP-N-acetyl-alpha-D-muramoyl-L-alanine + D-glutamate + ATP = UDP-N-acetyl-alpha-D-muramoyl-L-alanyl-D-glutamate + ADP + phosphate + H(+). It functions in the pathway cell wall biogenesis; peptidoglycan biosynthesis. In terms of biological role, cell wall formation. Catalyzes the addition of glutamate to the nucleotide precursor UDP-N-acetylmuramoyl-L-alanine (UMA). The sequence is that of UDP-N-acetylmuramoylalanine--D-glutamate ligase from Pseudomonas syringae pv. tomato (strain ATCC BAA-871 / DC3000).